The following is a 90-amino-acid chain: Small ribosomal subunit protein uS15c (90 aa).

The protein belongs to the universal ribosomal protein uS15 family. Part of the 30S ribosomal subunit.

Its subcellular location is the plastid. It localises to the chloroplast. The protein is Small ribosomal subunit protein uS15c (rps15) of Morus indica (Mulberry).